A 287-amino-acid polypeptide reads, in one-letter code: 4,4'-diapophytoene synthase (287 aa).

(2E,6E)-farnesyl diphosphate contacts are provided by residues 18–21, Y41, and R45; that span reads HSKS. D48 and D52 together coordinate Mg(2+). Q165 lines the (2E,6E)-farnesyl diphosphate pocket. A Mg(2+)-binding site is contributed by N168. R171 is a binding site for (2E,6E)-farnesyl diphosphate. D172 provides a ligand contact to Mg(2+). Y248 contributes to the (2E,6E)-farnesyl diphosphate binding site.

Belongs to the phytoene/squalene synthase family. CrtM subfamily. Mg(2+) is required as a cofactor.

It catalyses the reaction 2 (2E,6E)-farnesyl diphosphate = 15-cis-4,4'-diapophytoene + 2 diphosphate. The protein operates within carotenoid biosynthesis; staphyloxanthin biosynthesis; staphyloxanthin from farnesyl diphosphate: step 1/5. Functionally, involved in the biosynthesis of the yellow-orange carotenoid staphyloxanthin, which plays a role in the virulence via its protective function against oxidative stress. Catalyzes the head-to-head condensation of two molecules of farnesyl diphosphate (FPP) into the colorless C(30) carotenoid 4,4'-diapophytoene (dehydrosqualene). In Staphylococcus aureus (strain Mu50 / ATCC 700699), this protein is 4,4'-diapophytoene synthase (crtM).